The primary structure comprises 206 residues: LexA repressor (206 aa).

The H-T-H motif DNA-binding region spans 27–47 (YEEIRQNLGFRSLNAVFKHLK). Active-site for autocatalytic cleavage activity residues include Ser-120 and Lys-157.

It belongs to the peptidase S24 family. As to quaternary structure, homodimer.

The catalysed reaction is Hydrolysis of Ala-|-Gly bond in repressor LexA.. In terms of biological role, represses a number of genes involved in the response to DNA damage (SOS response), including recA and lexA. In the presence of single-stranded DNA, RecA interacts with LexA causing an autocatalytic cleavage which disrupts the DNA-binding part of LexA, leading to derepression of the SOS regulon and eventually DNA repair. This is LexA repressor from Syntrophobacter fumaroxidans (strain DSM 10017 / MPOB).